The primary structure comprises 889 residues: Inter-alpha-trypsin inhibitor heavy chain H3 (889 aa).

Positions 1–21 are cleaved as a signal peptide; it reads MRTMWWPCLVLALLSGLETSG. Residues 22–33 constitute a propeptide that is removed on maturation; the sequence is FPRSPLQLLGKR. The region spanning 29 to 158 is the VIT domain; the sequence is LLGKRSLPEG…KVTFELTYEE (130 aa). N91 carries an N-linked (GlcNAc...) asparagine glycan. The region spanning 284–467 is the VWFA domain; that stretch reads NIVFVIDVSG…LQLQGFYEEV (184 aa). Residue N580 is glycosylated (N-linked (GlcNAc...) asparagine). D649 carries the aspartate 1-(chondroitin 4-sulfate)-ester modification. Residues 650–889 constitute a propeptide that is removed on maturation; that stretch reads PHFIIQIPGK…HTDYIVPSLF (240 aa).

It belongs to the ITIH family. As to quaternary structure, I-alpha-I plasma protease inhibitors are assembled from one or two heavy chains (HC) and one light chain, bikunin. Pre-alpha-inhibitor (P-alpha-I) is composed of ITIH3/HC3 and bikunin. In terms of processing, heavy chains are linked to bikunin via chondroitin 4-sulfate esterified to the alpha-carboxyl of the C-terminal aspartate after propeptide cleavage. In terms of tissue distribution, expressed in both liver and brain.

Its subcellular location is the secreted. Its function is as follows. May act as a carrier of hyaluronan in serum or as a binding protein between hyaluronan and other matrix protein, including those on cell surfaces in tissues to regulate the localization, synthesis and degradation of hyaluronan which are essential to cells undergoing biological processes. This is Inter-alpha-trypsin inhibitor heavy chain H3 (Itih3) from Mus musculus (Mouse).